We begin with the raw amino-acid sequence, 113 residues long: Large ribosomal subunit protein eL36z (113 aa).

The span at arginine 78–arginine 88 shows a compositional bias: basic residues. The disordered stretch occupies residues arginine 78–methionine 113.

Belongs to the eukaryotic ribosomal protein eL36 family.

This Arabidopsis thaliana (Mouse-ear cress) protein is Large ribosomal subunit protein eL36z (RPL36A).